The sequence spans 519 residues: Cytochrome P450 52-E3 (519 aa).

The chain crosses the membrane as a helical span at residues 10-30; that stretch reads VLGGISVSFLLAYQAIYFYFI. Cysteine 461 contacts heme.

The protein belongs to the cytochrome P450 family. Requires heme as cofactor.

The protein resides in the membrane. The enzyme catalyses an omega-methyl-long-chain fatty acid + reduced [NADPH--hemoprotein reductase] + O2 = an omega-hydroxy-long-chain fatty acid + oxidized [NADPH--hemoprotein reductase] + H2O + H(+). It catalyses the reaction (9Z)-octadecenoate + reduced [NADPH--hemoprotein reductase] + O2 = 18-hydroxy-(9Z)-octadecenoate + oxidized [NADPH--hemoprotein reductase] + H2O + H(+). The catalysed reaction is hexadecanoate + reduced [NADPH--hemoprotein reductase] + O2 = 16-hydroxyhexadecanoate + oxidized [NADPH--hemoprotein reductase] + H2O + H(+). It carries out the reaction (9Z)-hexadecenoate + reduced [NADPH--hemoprotein reductase] + O2 = (9Z)-16-hydroxyhexadec-9-enoate + oxidized [NADPH--hemoprotein reductase] + H2O + H(+). In terms of biological role, catalyzes the terminal (at the omega-position) hydroxylation of a fatty acid. Probably involved in alkane metabolism. Has minor activity toward myristic acid, palmitic acid, palmitoleic acid and oleic acid. The protein is Cytochrome P450 52-E3 of Starmerella bombicola (Yeast).